The following is a 90-amino-acid chain: Probable Fe(2+)-trafficking protein (90 aa).

Belongs to the Fe(2+)-trafficking protein family.

Functionally, could be a mediator in iron transactions between iron acquisition and iron-requiring processes, such as synthesis and/or repair of Fe-S clusters in biosynthetic enzymes. This chain is Probable Fe(2+)-trafficking protein, found in Pseudomonas fluorescens (strain SBW25).